The sequence spans 1881 residues: Ankyrin-1 (1881 aa).

The 89 kDa domain stretch occupies residues methionine 1–phenylalanine 827. ANK repeat units lie at residues asparagine 44–threonine 73, lysine 77–alanine 106, lysine 110–valine 139, aspartate 143–valine 172, leucine 174–valine 201, threonine 205–phenylalanine 234, asparagine 238–threonine 267, aspartate 271–alanine 300, asparagine 304–aspartate 333, aspartate 337–serine 366, asparagine 370–alanine 399, serine 403–valine 432, lysine 436–alanine 465, aspartate 469–leucine 498, alanine 502–cysteine 531, lysine 535–alanine 564, asparagine 568–serine 597, asparagine 601–alanine 630, glutamine 634–leucine 663, serine 667–alanine 696, methionine 700–alanine 729, leucine 733–glutamate 762, and aspartate 766–phenylalanine 795. Asparagine 105 carries the post-translational modification (3S)-3-hydroxyasparagine; by HIF1AN; partial. Asparagine 233 is modified ((3S)-3-hydroxyasparagine; by HIF1AN; partial). Residue serine 429 is modified to Phosphoserine. A (3S)-3-hydroxyasparagine; by HIF1AN; partial mark is found at asparagine 431 and asparagine 464. Asparagine 629 and asparagine 662 each carry (3S)-3-hydroxyasparagine; by HIF1AN; partial. Aspartate 695 is modified ((3S)-3-hydroxyaspartate; by HIF1AN; partial). Residue asparagine 728 is modified to (3S)-3-hydroxyasparagine; by HIF1AN; partial. Residue serine 759 is modified to Phosphoserine. The residue at position 761 (asparagine 761) is a (3S)-3-hydroxyasparagine; by HIF1AN; partial. 4 positions are modified to phosphoserine: serine 781, serine 817, serine 834, and serine 856. Residues glutamate 875 to proline 904 are disordered. Positions isoleucine 890–proline 904 are enriched in polar residues. ZU5 domains lie at phenylalanine 913 to arginine 1068 and cysteine 1070 to cysteine 1216. Threonine 961 is modified (phosphothreonine). Phosphotyrosine is present on tyrosine 1073. Serine 1082 carries the phosphoserine modification. The UPA domain stretch occupies residues threonine 1234–threonine 1362. A phosphothreonine mark is found at threonine 1378 and threonine 1380. Positions alanine 1383–proline 1881 are 55 kDa regulatory domain. Residues serine 1390, serine 1392, and serine 1396 each carry the phosphoserine modification. The residue at position 1400 (threonine 1400) is a Phosphothreonine. In terms of domain architecture, Death spans alanine 1403–glycine 1487. Residues serine 1428 and serine 1486 each carry the phosphoserine modification. The disordered stretch occupies residues serine 1486–glutamine 1510. Basic and acidic residues predominate over residues leucine 1493–tyrosine 1504. Phosphoserine is present on residues serine 1523 and serine 1533. The interval serine 1583 to proline 1613 is disordered. Over residues serine 1588–glycine 1612 the composition is skewed to basic and acidic residues. Serine 1617 bears the Phosphoserine mark. Disordered stretches follow at residues leucine 1637–tryptophan 1703, glutamine 1718–asparagine 1791, and alanine 1840–serine 1859. Residues glutamate 1642–aspartate 1658 are compositionally biased toward basic and acidic residues. Residues serine 1666, serine 1671, serine 1686, serine 1690, and serine 1696 each carry the phosphoserine modification. Over residues isoleucine 1683–glutamate 1694 the composition is skewed to polar residues. Composition is skewed to polar residues over residues glutamine 1718–threonine 1739 and serine 1758–serine 1771. The span at glutamine 1772 to glycine 1781 shows a compositional bias: basic and acidic residues.

As to quaternary structure, component of the ankyrin-1 complex in the erythrocyte, composed of ANK1, RHCE, RHAG, SLC4A1, EPB42, GYPA, GYPB and AQP1. Interacts with a number of integral membrane proteins and cytoskeletal proteins. Interacts (via N-terminus) with SPTB/spectrin (beta chain). Also interacts with TTN/titin. Isoform Mu17 interacts with OBSCN isoform 3/obscurin. Interacts with HIF1AN. Interacts (via ANK 1-5 repeats) with RHCE; this interaction mediates the primary membrane attachment site for ANK1. Interacts (via ANK 1-2 repeats) with AQP1 (via the N-terminal). Interacts (via ANK 1-13 repeats) with EPB42. Interacts directly with SLC4A1 (via the cytoplasmic domain); this interaction is mediated by the SLC4A1 Band 3-II and Band 3-III dimers. Regulated by phosphorylation. Post-translationally, palmitoylated. In terms of processing, hydroxylated by HIF1AN at several asparagine and 1 aspartate residue within ANK repeat region. Hydroxylation seems to increase the conformational stability of this region and may also modulate protein-protein interactions mediated by the ANK repeat region. (Microbial infection) Probably cleaved by P.falciparum SERA6; the cleavage probably causes the disruption of the actin cytoskeleton and the rupture of the erythrocyte cell membrane releasing the merozoites. In terms of tissue distribution, isoform Mu17, isoform Mu18, isoform Mu19 and isoform Mu20 are expressed in skeletal muscle. Isoform Br21 is expressed in brain.

Its subcellular location is the cytoplasm. The protein localises to the cytoskeleton. It localises to the membrane. It is found in the myofibril. The protein resides in the sarcomere. Its subcellular location is the m line. The protein localises to the sarcoplasmic reticulum. Its function is as follows. Component of the ankyrin-1 complex, a multiprotein complex involved in the stability and shape of the erythrocyte membrane. Attaches integral membrane proteins to cytoskeletal elements; binds to the erythrocyte membrane protein band 4.2, to Na-K ATPase, to the lymphocyte membrane protein GP85, and to the cytoskeletal proteins fodrin, tubulin, vimentin and desmin. Erythrocyte ankyrins also link spectrin (beta chain) to the cytoplasmic domain of the erythrocytes anion exchange protein; they retain most or all of these binding functions. In terms of biological role, together with obscurin in skeletal muscle may provide a molecular link between the sarcoplasmic reticulum and myofibrils. The protein is Ankyrin-1 of Homo sapiens (Human).